Reading from the N-terminus, the 156-residue chain is Small ribosomal subunit protein uS7 (156 aa).

Belongs to the universal ribosomal protein uS7 family. In terms of assembly, part of the 30S ribosomal subunit. Contacts proteins S9 and S11.

One of the primary rRNA binding proteins, it binds directly to 16S rRNA where it nucleates assembly of the head domain of the 30S subunit. Is located at the subunit interface close to the decoding center, probably blocks exit of the E-site tRNA. The protein is Small ribosomal subunit protein uS7 of Pediococcus pentosaceus (strain ATCC 25745 / CCUG 21536 / LMG 10740 / 183-1w).